Reading from the N-terminus, the 448-residue chain is N-succinylarginine dihydrolase (448 aa).

Residues 19–28, Asn-110, and 137–138 contribute to the substrate site; these read GGLSYGNVAS and HR. Residue Glu-174 is part of the active site. Arg-214 lines the substrate pocket. The active site involves His-250. Substrate is bound by residues Asp-252 and Asn-365. Cys-371 acts as the Nucleophile in catalysis.

The protein belongs to the succinylarginine dihydrolase family. As to quaternary structure, homodimer.

The enzyme catalyses N(2)-succinyl-L-arginine + 2 H2O + 2 H(+) = N(2)-succinyl-L-ornithine + 2 NH4(+) + CO2. It participates in amino-acid degradation; L-arginine degradation via AST pathway; L-glutamate and succinate from L-arginine: step 2/5. In terms of biological role, catalyzes the hydrolysis of N(2)-succinylarginine into N(2)-succinylornithine, ammonia and CO(2). The polypeptide is N-succinylarginine dihydrolase (Pseudomonas aeruginosa (strain LESB58)).